Consider the following 144-residue polypeptide: 3-hydroxyacyl-[acyl-carrier-protein] dehydratase FabZ (144 aa).

H51 is a catalytic residue.

Belongs to the thioester dehydratase family. FabZ subfamily.

Its subcellular location is the cytoplasm. The enzyme catalyses a (3R)-hydroxyacyl-[ACP] = a (2E)-enoyl-[ACP] + H2O. Functionally, involved in unsaturated fatty acids biosynthesis. Catalyzes the dehydration of short chain beta-hydroxyacyl-ACPs and long chain saturated and unsaturated beta-hydroxyacyl-ACPs. The polypeptide is 3-hydroxyacyl-[acyl-carrier-protein] dehydratase FabZ (Clostridium botulinum (strain Langeland / NCTC 10281 / Type F)).